A 272-amino-acid polypeptide reads, in one-letter code: Prephenate dehydratase (272 aa).

One can recognise a Prephenate dehydratase domain in the interval 4 to 179 (AVIYTLPKGT…NKTRFILIGK (176 aa)). One can recognise an ACT domain in the interval 194–269 (IVFELKEDKP…TFINLLGKYP (76 aa)).

As to quaternary structure, homodimer.

The catalysed reaction is prephenate + H(+) = 3-phenylpyruvate + CO2 + H2O. Its pathway is amino-acid biosynthesis; L-phenylalanine biosynthesis; phenylpyruvate from prephenate: step 1/1. Inhibited by L-phenylalanine but not by L-tyrosine or L-tryptophan. The chain is Prephenate dehydratase (pheA) from Methanocaldococcus jannaschii (strain ATCC 43067 / DSM 2661 / JAL-1 / JCM 10045 / NBRC 100440) (Methanococcus jannaschii).